Reading from the N-terminus, the 330-residue chain is AH receptor-interacting protein (330 aa).

Residues 31–121 (GTKATFHYRT…KDPLEGQRHC (91 aa)) enclose the PPIase FKBP-type domain. A Phosphoserine modification is found at Ser-43. 3 TPR repeats span residues 179–212 (VPLI…LKNL), 231–264 (TPLL…YDDN), and 265–298 (VKAY…DPAL).

Interacts with RET in the pituitary gland; this interaction prevents the formation of the AIP-survivin complex. As to expression, widely expressed. Higher levels seen in the heart, placenta and skeletal muscle. Not expressed in the liver.

It localises to the cytoplasm. May play a positive role in AHR-mediated (aromatic hydrocarbon receptor) signaling, possibly by influencing its receptivity for ligand and/or its nuclear targeting. Functionally, cellular negative regulator of the hepatitis B virus (HBV) X protein. This chain is AH receptor-interacting protein (AIP), found in Homo sapiens (Human).